The primary structure comprises 269 residues: Regulatory protein RecX (269 aa).

Belongs to the RecX family.

The protein localises to the cytoplasm. Functionally, modulates RecA activity. The chain is Regulatory protein RecX from Listeria monocytogenes serotype 4b (strain F2365).